Here is a 384-residue protein sequence, read N- to C-terminus: S-adenosylmethionine synthase (384 aa).

An ATP-binding site is contributed by His-15. Asp-17 contacts Mg(2+). Glu-43 lines the K(+) pocket. L-methionine-binding residues include Glu-56 and Gln-99. The interval 99–109 (QSSDINQGVDR) is flexible loop. ATP is bound by residues 164 to 166 (DAK), 230 to 231 (RF), Asp-239, 245 to 246 (RK), Ala-262, and Lys-266. L-methionine is bound at residue Asp-239. Lys-270 is a binding site for L-methionine.

It belongs to the AdoMet synthase family. As to quaternary structure, homotetramer; dimer of dimers. The cofactor is Mg(2+). K(+) is required as a cofactor.

The protein resides in the cytoplasm. It catalyses the reaction L-methionine + ATP + H2O = S-adenosyl-L-methionine + phosphate + diphosphate. It participates in amino-acid biosynthesis; S-adenosyl-L-methionine biosynthesis; S-adenosyl-L-methionine from L-methionine: step 1/1. Functionally, catalyzes the formation of S-adenosylmethionine (AdoMet) from methionine and ATP. The overall synthetic reaction is composed of two sequential steps, AdoMet formation and the subsequent tripolyphosphate hydrolysis which occurs prior to release of AdoMet from the enzyme. This Pasteurella multocida (strain Pm70) protein is S-adenosylmethionine synthase.